A 166-amino-acid polypeptide reads, in one-letter code: Thiamine precursor transporter HmpT (166 aa).

Transmembrane regions (helical) follow at residues 14 to 34, 35 to 55, 62 to 82, 105 to 125, and 126 to 146; these read LLAI…FPIP, GSAG…VFLF, IIGG…NYMF, FLLS…LMYG, and WGSA…GFVL.

In E.coli forms a stable energy-coupling factor (ECF) transporter complex composed of 2 membrane-embedded substrate-binding protein (S component), 2 ATP-binding proteins (A and A' components) and 2 transmembrane proteins (T component), probably with a stoichiometry of 2:1:1:2. May be able to interact with more than 1 S component at a time.

Its subcellular location is the cell membrane. Its function is as follows. Probably a thiamine precursor-binding protein that interacts with the energy-coupling factor (ECF) ABC-transporter complex. Unlike classic ABC transporters this ECF transporter provides the energy necessary to transport a number of different substrates. The substrates themselves are bound by transmembrane, not extracytoplasmic soluble proteins. This Lactococcus lactis subsp. cremoris (strain MG1363) protein is Thiamine precursor transporter HmpT (hmpT).